Here is a 209-residue protein sequence, read N- to C-terminus: High frequency lysogenization protein HflD homolog (209 aa).

Positions 95-132 (LERKLAASKGAMNTLGNRIADLSRQLEHFELESDTLMS) form a coiled coil.

This sequence belongs to the HflD family.

It localises to the cytoplasm. Its subcellular location is the cell inner membrane. The sequence is that of High frequency lysogenization protein HflD homolog from Cronobacter sakazakii (strain ATCC BAA-894) (Enterobacter sakazakii).